The chain runs to 312 residues: Gamma-soluble NSF attachment protein (312 aa).

The disordered stretch occupies residues 281 to 312; sequence KKKSPATPQAKPDGVTATAADEEEDEYSGGLC. Phosphoserine is present on S284. T287 is subject to Phosphothreonine. Residues 300-312 show a composition bias toward acidic residues; it reads ADEEEDEYSGGLC. At S308 the chain carries Phosphoserine.

Belongs to the SNAP family. In terms of assembly, interacts with RAB11FIP5. Interacts with VTI1A.

The protein localises to the membrane. Its subcellular location is the golgi apparatus. Functionally, required for vesicular transport between the endoplasmic reticulum and the Golgi apparatus. This chain is Gamma-soluble NSF attachment protein, found in Homo sapiens (Human).